Reading from the N-terminus, the 515-residue chain is 2-isopropylmalate synthase (515 aa).

The Pyruvate carboxyltransferase domain maps to 5 to 267 (VIIFDTTLRD…HTNLKHDEIH (263 aa)). 4 residues coordinate Mn(2+): Asp14, His202, His204, and Asn238. The interval 392-515 (KLNYLSVQSG…EIKQKKVETV (124 aa)) is regulatory domain.

Belongs to the alpha-IPM synthase/homocitrate synthase family. LeuA type 1 subfamily. In terms of assembly, homodimer. Requires Mn(2+) as cofactor.

The protein resides in the cytoplasm. The catalysed reaction is 3-methyl-2-oxobutanoate + acetyl-CoA + H2O = (2S)-2-isopropylmalate + CoA + H(+). It functions in the pathway amino-acid biosynthesis; L-leucine biosynthesis; L-leucine from 3-methyl-2-oxobutanoate: step 1/4. In terms of biological role, catalyzes the condensation of the acetyl group of acetyl-CoA with 3-methyl-2-oxobutanoate (2-ketoisovalerate) to form 3-carboxy-3-hydroxy-4-methylpentanoate (2-isopropylmalate). The polypeptide is 2-isopropylmalate synthase (Aliivibrio fischeri (strain MJ11) (Vibrio fischeri)).